The primary structure comprises 45 residues: Photosystem II reaction center protein K (45 aa).

A propeptide spanning residues methionine 1–glycine 8 is cleaved from the precursor. A helical transmembrane segment spans residues isoleucine 20–alanine 40.

Belongs to the PsbK family. PSII is composed of 1 copy each of membrane proteins PsbA, PsbB, PsbC, PsbD, PsbE, PsbF, PsbH, PsbI, PsbJ, PsbK, PsbL, PsbM, PsbT, PsbX, PsbY, PsbZ, Psb30/Ycf12, at least 3 peripheral proteins of the oxygen-evolving complex and a large number of cofactors. It forms dimeric complexes.

The protein localises to the plastid. The protein resides in the chloroplast thylakoid membrane. Functionally, one of the components of the core complex of photosystem II (PSII). PSII is a light-driven water:plastoquinone oxidoreductase that uses light energy to abstract electrons from H(2)O, generating O(2) and a proton gradient subsequently used for ATP formation. It consists of a core antenna complex that captures photons, and an electron transfer chain that converts photonic excitation into a charge separation. The protein is Photosystem II reaction center protein K of Ostreococcus tauri.